A 115-amino-acid chain; its full sequence is Protein Wnt-2 (115 aa).

Serine 1 carries O-palmitoleoyl serine; by PORCN lipidation. Cysteine 81 and cysteine 96 form a disulfide bridge. N-linked (GlcNAc...) asparagine glycosylation is present at asparagine 82.

Belongs to the Wnt family. Palmitoleoylation is required for efficient binding to frizzled receptors. Depalmitoleoylation leads to Wnt signaling pathway inhibition.

It is found in the secreted. Its subcellular location is the extracellular space. The protein localises to the extracellular matrix. Functionally, ligand for members of the frizzled family of seven transmembrane receptors. Probable developmental protein. May be a signaling molecule which affects the development of discrete regions of tissues. Is likely to signal over only few cell diameters. This is Protein Wnt-2 (WNT-2) from Strongylocentrotus purpuratus (Purple sea urchin).